The sequence spans 63 residues: Cecropin-A (63 aa).

Positions 1 to 22 are cleaved as a signal peptide; the sequence is MNFVRILSFVFALVLALGAVSA. The propeptide occupies 23–26; that stretch reads APEP. Leucine amide is present on L61.

It belongs to the cecropin family. Highest expression in fat body and hemocytes. Is also expressed in Malpighian tubules and to a much lesser extent in midgut. Not present in silk gland.

It localises to the secreted. Functionally, cecropins have lytic and antibacterial activity against several Gram-positive and Gram-negative bacteria. This is Cecropin-A (CECA) from Bombyx mori (Silk moth).